Here is a 144-residue protein sequence, read N- to C-terminus: D-aminoacyl-tRNA deacylase (144 aa).

The Gly-cisPro motif, important for rejection of L-amino acids motif lies at 136–137; sequence GP.

This sequence belongs to the DTD family. Homodimer.

The protein resides in the cytoplasm. The catalysed reaction is glycyl-tRNA(Ala) + H2O = tRNA(Ala) + glycine + H(+). The enzyme catalyses a D-aminoacyl-tRNA + H2O = a tRNA + a D-alpha-amino acid + H(+). In terms of biological role, an aminoacyl-tRNA editing enzyme that deacylates mischarged D-aminoacyl-tRNAs. Also deacylates mischarged glycyl-tRNA(Ala), protecting cells against glycine mischarging by AlaRS. Acts via tRNA-based rather than protein-based catalysis; rejects L-amino acids rather than detecting D-amino acids in the active site. By recycling D-aminoacyl-tRNA to D-amino acids and free tRNA molecules, this enzyme counteracts the toxicity associated with the formation of D-aminoacyl-tRNA entities in vivo and helps enforce protein L-homochirality. The protein is D-aminoacyl-tRNA deacylase of Vibrio vulnificus (strain CMCP6).